A 92-amino-acid polypeptide reads, in one-letter code: Small ribosomal subunit protein uS15 (92 aa).

It belongs to the universal ribosomal protein uS15 family. As to quaternary structure, part of the 30S ribosomal subunit. Forms a bridge to the 50S subunit in the 70S ribosome, contacting the 23S rRNA.

One of the primary rRNA binding proteins, it binds directly to 16S rRNA where it helps nucleate assembly of the platform of the 30S subunit by binding and bridging several RNA helices of the 16S rRNA. In terms of biological role, forms an intersubunit bridge (bridge B4) with the 23S rRNA of the 50S subunit in the ribosome. This Symbiobacterium thermophilum (strain DSM 24528 / JCM 14929 / IAM 14863 / T) protein is Small ribosomal subunit protein uS15.